The primary structure comprises 441 residues: MTEHRVTVIGAGLAGSEAAWQLARRGIHVDLYEMRPQKYPPAHHTAYFSELVCSNSLRAAAIENAVGLLKEEMRQLDSLIISAADNHKVPAGGALAVDREGFSRYITETLEDHPLIDIHREEVTKIPEKGIVIVASGPLTSESLSHEIAKVTGEQYLYFYDAAAPIVTLESLDMTKVFRASRYGKGEEAYLNCPMDQDEYEKFYDALIHAERAPIKEFEKQVHFEGCMPVEVLASRGKDTLLYGPLKPVGLTDPRTGKRPHGVVQLRQDNAEGTLFNLVGFQTNLKWGEQKRVFSFIPGLEDAEFVRYGVMHRNTYITSPVLLQPTLQMKEHPRIFFAGQITGVEGYVESAAAGLIAGINAAALAKQKDLLIFPKETAHGALMHYITTASTKNFQPMNVTFGLFPELTVRLKGKRERGRAQAERALEILKEWIEKEKICDI.

Residue 10 to 15 coordinates FAD; the sequence is GAGLAG.

Belongs to the MnmG family. TrmFO subfamily. FAD is required as a cofactor.

Its subcellular location is the cytoplasm. The catalysed reaction is uridine(54) in tRNA + (6R)-5,10-methylene-5,6,7,8-tetrahydrofolate + NADH + H(+) = 5-methyluridine(54) in tRNA + (6S)-5,6,7,8-tetrahydrofolate + NAD(+). It catalyses the reaction uridine(54) in tRNA + (6R)-5,10-methylene-5,6,7,8-tetrahydrofolate + NADPH + H(+) = 5-methyluridine(54) in tRNA + (6S)-5,6,7,8-tetrahydrofolate + NADP(+). In terms of biological role, catalyzes the folate-dependent formation of 5-methyl-uridine at position 54 (M-5-U54) in all tRNAs. This Desulforamulus reducens (strain ATCC BAA-1160 / DSM 100696 / MI-1) (Desulfotomaculum reducens) protein is Methylenetetrahydrofolate--tRNA-(uracil-5-)-methyltransferase TrmFO.